Consider the following 210-residue polypeptide: dTTP/UTP pyrophosphatase (210 aa).

Asp-85 serves as the catalytic Proton acceptor.

The protein belongs to the Maf family. YhdE subfamily. The cofactor is a divalent metal cation.

The protein resides in the cytoplasm. It carries out the reaction dTTP + H2O = dTMP + diphosphate + H(+). The enzyme catalyses UTP + H2O = UMP + diphosphate + H(+). Nucleoside triphosphate pyrophosphatase that hydrolyzes dTTP and UTP. May have a dual role in cell division arrest and in preventing the incorporation of modified nucleotides into cellular nucleic acids. The chain is dTTP/UTP pyrophosphatase from Saccharophagus degradans (strain 2-40 / ATCC 43961 / DSM 17024).